The chain runs to 424 residues: DNA primase DnaG (424 aa).

A Toprim domain is found at 171–245; the sequence is DDIIVVEGRA…DVDFVARAPP (75 aa). 3 residues coordinate Mg(2+): Glu177, Asp219, and Asp221.

The protein belongs to the archaeal DnaG primase family. Forms a ternary complex with MCM helicase and DNA. Mg(2+) serves as cofactor.

The catalysed reaction is ssDNA + n NTP = ssDNA/pppN(pN)n-1 hybrid + (n-1) diphosphate.. Functionally, RNA polymerase that catalyzes the synthesis of short RNA molecules used as primers for DNA polymerase during DNA replication. The polypeptide is DNA primase DnaG (Methanocaldococcus jannaschii (strain ATCC 43067 / DSM 2661 / JAL-1 / JCM 10045 / NBRC 100440) (Methanococcus jannaschii)).